A 743-amino-acid chain; its full sequence is NAD(P)H-quinone oxidoreductase subunit 5, chloroplastic (743 aa).

14 helical membrane passes run 9–29, 40–60, 89–109, 125–145, 147–167, 184–204, 219–239, 258–278, 280–300, 396–416, 425–445, 548–568, 607–627, and 723–743; these read WIIP…LLLF, WAFH…DLSI, IDPL…MVLI, FAYM…SNLI, IYIF…FWFT, IGDL…GSFE, NEVN…GAVA, TPIS…FLVA, LLPL…IGII, TAFF…CFWS, WLYS…TAFY, LLPL…GIPF, IFSV…YKPV, and YLFL…FLNL.

The protein belongs to the complex I subunit 5 family. NDH is composed of at least 16 different subunits, 5 of which are encoded in the nucleus.

The protein localises to the plastid. Its subcellular location is the chloroplast thylakoid membrane. It carries out the reaction a plastoquinone + NADH + (n+1) H(+)(in) = a plastoquinol + NAD(+) + n H(+)(out). It catalyses the reaction a plastoquinone + NADPH + (n+1) H(+)(in) = a plastoquinol + NADP(+) + n H(+)(out). Functionally, NDH shuttles electrons from NAD(P)H:plastoquinone, via FMN and iron-sulfur (Fe-S) centers, to quinones in the photosynthetic chain and possibly in a chloroplast respiratory chain. The immediate electron acceptor for the enzyme in this species is believed to be plastoquinone. Couples the redox reaction to proton translocation, and thus conserves the redox energy in a proton gradient. The sequence is that of NAD(P)H-quinone oxidoreductase subunit 5, chloroplastic (ndhF) from Carpenteria californica (Tree anemone).